A 689-amino-acid chain; its full sequence is Glycine--tRNA ligase beta subunit (689 aa).

This sequence belongs to the class-II aminoacyl-tRNA synthetase family. In terms of assembly, tetramer of two alpha and two beta subunits.

It is found in the cytoplasm. It carries out the reaction tRNA(Gly) + glycine + ATP = glycyl-tRNA(Gly) + AMP + diphosphate. This Acinetobacter baylyi (strain ATCC 33305 / BD413 / ADP1) protein is Glycine--tRNA ligase beta subunit.